Here is a 359-residue protein sequence, read N- to C-terminus: 3-dehydroquinate synthase (359 aa).

NAD(+) is bound by residues 70 to 75 (DAEGGK), 104 to 108 (GAATD), 128 to 129 (TT), Lys141, and Lys150. Glu183, His246, and His262 together coordinate Zn(2+).

It belongs to the sugar phosphate cyclases superfamily. Dehydroquinate synthase family. Co(2+) serves as cofactor. The cofactor is Zn(2+). Requires NAD(+) as cofactor.

It localises to the cytoplasm. It catalyses the reaction 7-phospho-2-dehydro-3-deoxy-D-arabino-heptonate = 3-dehydroquinate + phosphate. The protein operates within metabolic intermediate biosynthesis; chorismate biosynthesis; chorismate from D-erythrose 4-phosphate and phosphoenolpyruvate: step 2/7. Functionally, catalyzes the conversion of 3-deoxy-D-arabino-heptulosonate 7-phosphate (DAHP) to dehydroquinate (DHQ). This Mycolicibacterium vanbaalenii (strain DSM 7251 / JCM 13017 / BCRC 16820 / KCTC 9966 / NRRL B-24157 / PYR-1) (Mycobacterium vanbaalenii) protein is 3-dehydroquinate synthase.